Consider the following 284-residue polypeptide: Pantothenate synthetase (284 aa).

Residue Met-30–His-37 coordinates ATP. His-37 acts as the Proton donor in catalysis. Gln-61 is a (R)-pantoate binding site. A beta-alanine-binding site is contributed by Gln-61. Residue Gly-149 to Asp-152 participates in ATP binding. Gln-155 provides a ligand contact to (R)-pantoate. ATP-binding positions include Val-178 and Leu-186–Arg-189.

This sequence belongs to the pantothenate synthetase family. As to quaternary structure, homodimer.

The protein resides in the cytoplasm. It catalyses the reaction (R)-pantoate + beta-alanine + ATP = (R)-pantothenate + AMP + diphosphate + H(+). It participates in cofactor biosynthesis; (R)-pantothenate biosynthesis; (R)-pantothenate from (R)-pantoate and beta-alanine: step 1/1. Catalyzes the condensation of pantoate with beta-alanine in an ATP-dependent reaction via a pantoyl-adenylate intermediate. The protein is Pantothenate synthetase of Cronobacter sakazakii (strain ATCC BAA-894) (Enterobacter sakazakii).